A 1177-amino-acid polypeptide reads, in one-letter code: DNA-directed RNA polymerase subunit beta' (1177 aa).

Zn(2+) is bound by residues C60, C62, C75, and C78. D450, D452, and D454 together coordinate Mg(2+). Zn(2+)-binding residues include C795, C869, C876, and C879.

This sequence belongs to the RNA polymerase beta' chain family. As to quaternary structure, the RNAP catalytic core consists of 2 alpha, 1 beta, 1 beta' and 1 omega subunit. When a sigma factor is associated with the core the holoenzyme is formed, which can initiate transcription. Requires Mg(2+) as cofactor. Zn(2+) serves as cofactor.

It carries out the reaction RNA(n) + a ribonucleoside 5'-triphosphate = RNA(n+1) + diphosphate. In terms of biological role, DNA-dependent RNA polymerase catalyzes the transcription of DNA into RNA using the four ribonucleoside triphosphates as substrates. This Clostridium botulinum (strain Alaska E43 / Type E3) protein is DNA-directed RNA polymerase subunit beta'.